A 289-amino-acid polypeptide reads, in one-letter code: Nucleotide-binding protein MS1718 (289 aa).

8 to 15 is a binding site for ATP; sequence GRSGAGKS. 56–59 provides a ligand contact to GTP; that stretch reads DIRN.

It belongs to the RapZ-like family.

Displays ATPase and GTPase activities. The protein is Nucleotide-binding protein MS1718 of Mannheimia succiniciproducens (strain KCTC 0769BP / MBEL55E).